Here is a 103-residue protein sequence, read N- to C-terminus: UPF0091 protein PH0944 (103 aa).

The protein belongs to the UPF0091 family.

The protein is UPF0091 protein PH0944 of Pyrococcus horikoshii (strain ATCC 700860 / DSM 12428 / JCM 9974 / NBRC 100139 / OT-3).